A 557-amino-acid polypeptide reads, in one-letter code: uncharacterized protein (557 aa).

Residues 70–224 (KVVEKMNGKA…FNLVSLLKPG (155 aa)) enclose the Helicase ATP-binding domain. 82–90 (ADEVGLGKT) lines the ATP pocket. The DEAH box signature appears at 175–178 (DEAH). The Helicase C-terminal domain occupies 363–524 (QVVDLIKKID…NFEEHLHDIL (162 aa)).

It belongs to the SNF2/RAD54 helicase family.

This is an uncharacterized protein from Bacillus subtilis (strain 168).